The sequence spans 112 residues: uncharacterized protein (112 aa).

This is an uncharacterized protein from Caenorhabditis elegans.